The sequence spans 493 residues: MTTVRTRIAPSPTGDPHVGTAYIALFNYCFAKQHGGEFILRIEDTDQLRSTRESEQQIFDALRWLGIEWNEGPDVGGSHGPYRQSERGEIYAKYAKELVDAGHAFYCFCTAEELEQMRAEQMARGETPRYDGRALLLSDEEVQRRLAAGEPHVIRMKVPSEGICVVPDMLRGDVEIPWDRMDMQVLMKNDGLPTYFLANVVDDHLMGITHVLRGEEWLPSAPKLIKLYEYFGWEQPKLCYMPLLRNPDKSKLSKRKNPTSVTFYERMGFMPEAMLNYLGRMGWSMPDEREKFSLAEMVEHFDLSRISLGGPIFDIEKLSWLNGQWLRELPVEEFAARVQKWAFNSDYMMKIAPHVQGRVETFSQVAPLGGFFFEGALKLDAKLFESKKLSADQVRQVMQLILWKLESLRQWEKDRITGCIQAVVESLELKLRDAMPLMFAAITGQASSVSVLDAMEILGPDLTRYRLRQAIDLLGGVSKKENKEWEKLLASIA.

A 'HIGH' region motif is present at residues 10 to 20; sequence PSPTGDPHVGT. Positions 251–255 match the 'KMSKS' region motif; that stretch reads KLSKR. Position 254 (lysine 254) interacts with ATP.

The protein belongs to the class-I aminoacyl-tRNA synthetase family. Glutamate--tRNA ligase type 1 subfamily. In terms of assembly, monomer.

The protein resides in the cytoplasm. It carries out the reaction tRNA(Glu) + L-glutamate + ATP = L-glutamyl-tRNA(Glu) + AMP + diphosphate. In terms of biological role, catalyzes the attachment of glutamate to tRNA(Glu) in a two-step reaction: glutamate is first activated by ATP to form Glu-AMP and then transferred to the acceptor end of tRNA(Glu). This Pseudomonas entomophila (strain L48) protein is Glutamate--tRNA ligase.